The primary structure comprises 234 residues: tRNA (guanine-N(1)-)-methyltransferase (234 aa).

Residues G115 and 135-140 contribute to the S-adenosyl-L-methionine site; that span reads VGDYIL.

The protein belongs to the RNA methyltransferase TrmD family. Homodimer.

The protein resides in the cytoplasm. It catalyses the reaction guanosine(37) in tRNA + S-adenosyl-L-methionine = N(1)-methylguanosine(37) in tRNA + S-adenosyl-L-homocysteine + H(+). Functionally, specifically methylates guanosine-37 in various tRNAs. This chain is tRNA (guanine-N(1)-)-methyltransferase, found in Rickettsia rickettsii (strain Iowa).